The primary structure comprises 860 residues: Leucine--tRNA ligase (860 aa).

The 'HIGH' region signature appears at 42-52 (PYPSGRLHMGH). The short motif at 619-623 (KMSKS) is the 'KMSKS' region element. An ATP-binding site is contributed by K622.

Belongs to the class-I aminoacyl-tRNA synthetase family.

The protein resides in the cytoplasm. The catalysed reaction is tRNA(Leu) + L-leucine + ATP = L-leucyl-tRNA(Leu) + AMP + diphosphate. This chain is Leucine--tRNA ligase, found in Citrobacter koseri (strain ATCC BAA-895 / CDC 4225-83 / SGSC4696).